Reading from the N-terminus, the 273-residue chain is Multidrug-efflux transporter 2 regulator (273 aa).

The 70-residue stretch at 8–77 folds into the HTH merR-type domain; the sequence is YFTTGEFSKL…LKEIKCLIKG (70 aa). The segment at residues 11 to 30 is a DNA-binding region (H-T-H motif); it reads TGEFSKLCRVKKQTLFHYDE.

In terms of biological role, activates transcription of the blt gene in response to structurally dissimilar drugs. This Bacillus subtilis (strain 168) protein is Multidrug-efflux transporter 2 regulator (bltR).